A 428-amino-acid polypeptide reads, in one-letter code: Diaminopimelate decarboxylase (428 aa).

An N6-(pyridoxal phosphate)lysine modification is found at Lys64. Pyridoxal 5'-phosphate is bound by residues Gly239 and 281–284 (EPGR). The substrate site is built by Arg284, Arg319, and Tyr323. The Proton donor role is filled by Cys350. Glu351 and Tyr379 together coordinate substrate. Position 379 (Tyr379) interacts with pyridoxal 5'-phosphate.

Belongs to the Orn/Lys/Arg decarboxylase class-II family. LysA subfamily. In terms of assembly, homodimer. Pyridoxal 5'-phosphate serves as cofactor.

The enzyme catalyses meso-2,6-diaminopimelate + H(+) = L-lysine + CO2. Its pathway is amino-acid biosynthesis; L-lysine biosynthesis via DAP pathway; L-lysine from DL-2,6-diaminopimelate: step 1/1. Its function is as follows. Specifically catalyzes the decarboxylation of meso-diaminopimelate (meso-DAP) to L-lysine. The protein is Diaminopimelate decarboxylase of Methanothermobacter thermautotrophicus (strain ATCC 29096 / DSM 1053 / JCM 10044 / NBRC 100330 / Delta H) (Methanobacterium thermoautotrophicum).